The primary structure comprises 97 residues: Conotoxin Cal6.1e (97 aa).

Positions 1–22 (MKLTTVLIVAVLVLAACQFTVT) are cleaved as a signal peptide. The disordered stretch occupies residues 23-49 (DNSGDDTENPSLRSAGENQNPDSTKTI). The propeptide occupies 23–60 (DNSGDDTENPSLRSAGENQNPDSTKTITARATRARTNM). Residues 31 to 45 (NPSLRSAGENQNPDS) show a composition bias toward polar residues. 3 disulfides stabilise this stretch: Cys71-Cys87, Cys78-Cys91, and Cys86-Cys96.

Belongs to the conotoxin O1 superfamily. As to expression, expressed by the venom duct.

The protein resides in the secreted. Functionally, probable neurotoxin with unknown target. Possibly targets ion channels. This is Conotoxin Cal6.1e from Californiconus californicus (California cone).